Consider the following 498-residue polypeptide: Aldehyde dehydrogenase, mitochondrial (498 aa).

Residues 1-9 (MLRATLARL) constitute a mitochondrion transit peptide. Residue 242-247 (GSTAVG) coordinates NAD(+). Glu265 (proton acceptor) is an active-site residue. Cys299 serves as the catalytic Nucleophile.

This sequence belongs to the aldehyde dehydrogenase family.

It localises to the mitochondrion. It carries out the reaction an aldehyde + NAD(+) + H2O = a carboxylate + NADH + 2 H(+). Its pathway is alcohol metabolism; ethanol degradation; acetate from ethanol: step 2/2. Its function is as follows. Could have an RNA-binding activity in addition of its catalytic role. The chain is Aldehyde dehydrogenase, mitochondrial (ALDH2) from Leishmania tarentolae (Sauroleishmania tarentolae).